We begin with the raw amino-acid sequence, 441 residues long: 5-methylthioadenosine/S-adenosylhomocysteine deaminase (441 aa).

Residues H70 and H72 each coordinate Zn(2+). Substrate is bound by residues E99 and H191. H218 contributes to the Zn(2+) binding site. The substrate site is built by E221 and D306. D306 provides a ligand contact to Zn(2+).

This sequence belongs to the metallo-dependent hydrolases superfamily. MTA/SAH deaminase family. Requires Zn(2+) as cofactor.

It carries out the reaction S-adenosyl-L-homocysteine + H2O + H(+) = S-inosyl-L-homocysteine + NH4(+). The catalysed reaction is S-methyl-5'-thioadenosine + H2O + H(+) = S-methyl-5'-thioinosine + NH4(+). Functionally, catalyzes the deamination of 5-methylthioadenosine and S-adenosyl-L-homocysteine into 5-methylthioinosine and S-inosyl-L-homocysteine, respectively. Is also able to deaminate adenosine. The sequence is that of 5-methylthioadenosine/S-adenosylhomocysteine deaminase from Lawsonia intracellularis (strain PHE/MN1-00).